We begin with the raw amino-acid sequence, 155 residues long: MSRRGTAEEKTAKSDPIYRNRLVNMLVNRILKHGKKSLAYQIIYRALKKIQQKTETNPLSVLRQAIRGVTPNIAVKARRVGGSTHQVPIEIGSTQGKALAIRWLLGASRKRPGRNMAFKLSSELVDAAKGGGDAIRKKEETHRMAEANRAFAHFR.

Belongs to the universal ribosomal protein uS7 family. In terms of assembly, part of the 30S ribosomal subunit.

It localises to the plastid. The protein localises to the chloroplast. Its function is as follows. One of the primary rRNA binding proteins, it binds directly to 16S rRNA where it nucleates assembly of the head domain of the 30S subunit. This chain is Small ribosomal subunit protein uS7c (rps7), found in Lilium superbum (Turk's cap lily).